We begin with the raw amino-acid sequence, 291 residues long: Small ribosomal subunit biogenesis GTPase RsgA (291 aa).

In terms of domain architecture, CP-type G spans 63–221 (KNELKRPPVS…IADTPGFSAL (159 aa)). Residues 112-115 (TKKD) and 164-172 (GQSGVGKST) each bind GTP. Zn(2+) is bound by residues C245, C250, H252, and C258.

The protein belongs to the TRAFAC class YlqF/YawG GTPase family. RsgA subfamily. In terms of assembly, monomer. Associates with 30S ribosomal subunit, binds 16S rRNA. Requires Zn(2+) as cofactor.

The protein resides in the cytoplasm. Its function is as follows. One of several proteins that assist in the late maturation steps of the functional core of the 30S ribosomal subunit. Helps release RbfA from mature subunits. May play a role in the assembly of ribosomal proteins into the subunit. Circularly permuted GTPase that catalyzes slow GTP hydrolysis, GTPase activity is stimulated by the 30S ribosomal subunit. This Staphylococcus aureus (strain MRSA252) protein is Small ribosomal subunit biogenesis GTPase RsgA.